A 192-amino-acid polypeptide reads, in one-letter code: HTH-type transcriptional regulator Hpr (192 aa).

Positions 12–156 (SIIFSHKFAQ…LLSIVRHVYG (145 aa)) constitute an HTH marR-type domain. The H-T-H motif DNA-binding region spans 62-85 (ISDIAKFGVMHVSTAFNFSKKLEE).

As to quaternary structure, homodimer.

In terms of biological role, negative regulator of protease production and sporulation. The chain is HTH-type transcriptional regulator Hpr from Halalkalibacterium halodurans (strain ATCC BAA-125 / DSM 18197 / FERM 7344 / JCM 9153 / C-125) (Bacillus halodurans).